We begin with the raw amino-acid sequence, 395 residues long: Formate-dependent phosphoribosylglycinamide formyltransferase (395 aa).

Residues 22–23 (EL) and Glu-82 contribute to the N(1)-(5-phospho-beta-D-ribosyl)glycinamide site. Residues Arg-115, Lys-156, 161–166 (SSGKGQ), 196–199 (EGFI), and Glu-204 each bind ATP. In terms of domain architecture, ATP-grasp spans 120–309 (RLAAETLGLP…EFALHARAIL (190 aa)). Mg(2+)-binding residues include Glu-268 and Glu-280. N(1)-(5-phospho-beta-D-ribosyl)glycinamide is bound by residues Asp-287, Lys-356, and 363–364 (RR).

This sequence belongs to the PurK/PurT family. In terms of assembly, homodimer.

The catalysed reaction is N(1)-(5-phospho-beta-D-ribosyl)glycinamide + formate + ATP = N(2)-formyl-N(1)-(5-phospho-beta-D-ribosyl)glycinamide + ADP + phosphate + H(+). Its pathway is purine metabolism; IMP biosynthesis via de novo pathway; N(2)-formyl-N(1)-(5-phospho-D-ribosyl)glycinamide from N(1)-(5-phospho-D-ribosyl)glycinamide (formate route): step 1/1. Its function is as follows. Involved in the de novo purine biosynthesis. Catalyzes the transfer of formate to 5-phospho-ribosyl-glycinamide (GAR), producing 5-phospho-ribosyl-N-formylglycinamide (FGAR). Formate is provided by PurU via hydrolysis of 10-formyl-tetrahydrofolate. This Stenotrophomonas maltophilia (strain R551-3) protein is Formate-dependent phosphoribosylglycinamide formyltransferase.